The sequence spans 320 residues: Malate dehydrogenase (320 aa).

Residues 10 to 15 (GSGMIG) and aspartate 34 contribute to the NAD(+) site. Substrate contacts are provided by arginine 83 and arginine 89. NAD(+) contacts are provided by residues asparagine 96 and 119-121 (ITN). Substrate is bound by residues asparagine 121 and arginine 152. The Proton acceptor role is filled by histidine 176.

Belongs to the LDH/MDH superfamily. MDH type 3 family.

The enzyme catalyses (S)-malate + NAD(+) = oxaloacetate + NADH + H(+). Functionally, catalyzes the reversible oxidation of malate to oxaloacetate. The chain is Malate dehydrogenase from Brucella melitensis biotype 2 (strain ATCC 23457).